The following is a 420-amino-acid chain: Putative movement protein (420 aa).

Composition is skewed to low complexity over residues 1–18 and 30–59; these read MPLT…TSFS and TSCS…GSCP. Disordered stretches follow at residues 1 to 77, 137 to 181, 195 to 219, 235 to 281, 327 to 370, and 396 to 420; these read MPLT…TARP, SMSR…SARS, RPKT…STRT, IMSE…RPPP, PSAG…RPIQ, and LPPP…QPWP. A compositionally biased stretch (pro residues) spans 60–69; that stretch reads KTPPGTPPLP. Residues 137-157 show a composition bias toward polar residues; sequence SMSRRATQPPTTRSRVRPSTG. Residues 158–181 are compositionally biased toward low complexity; the sequence is SRPPVSPLVTSSSPSPFSTLSARS. A compositionally biased stretch (polar residues) spans 253–263; the sequence is GLRSASLSTAG. Low complexity predominate over residues 327 to 348; it reads PSAGSSPFTPTVSGCSASTSSA.

Its function is as follows. Cell-to-cell movement. The sequence is that of Putative movement protein from Maize rayado fino virus (isolate Costa Rica/Guapiles) (MRFV).